A 557-amino-acid chain; its full sequence is Probable protein kinase UbiB (557 aa).

One can recognise a Protein kinase domain in the interval 121–509 (AFDTTPLASA…RKLQTRVVTA (389 aa)). Residues 127 to 135 (LASASIAQV) and Lys154 contribute to the ATP site. The Proton acceptor role is filled by Asp289. Transmembrane regions (helical) follow at residues 506 to 526 (VVTA…YGLH) and 535 to 555 (VPVW…IAWL).

This sequence belongs to the ABC1 family. UbiB subfamily.

The protein resides in the cell inner membrane. It participates in cofactor biosynthesis; ubiquinone biosynthesis [regulation]. Is probably a protein kinase regulator of UbiI activity which is involved in aerobic coenzyme Q (ubiquinone) biosynthesis. The protein is Probable protein kinase UbiB of Xanthomonas campestris pv. campestris (strain B100).